Here is a 502-residue protein sequence, read N- to C-terminus: Acetyl-coenzyme A carboxylase carboxyl transferase subunit beta, chloroplastic (502 aa).

A compositionally biased stretch (low complexity) spans 191–202 (GSDSESSSIRTS). The tract at residues 191-212 (GSDSESSSIRTSGNDSNFNVRE) is disordered. The region spanning 226-497 (LWVQCENCYE…NQNSSGARGS (272 aa)) is the CoA carboxyltransferase N-terminal domain. The Zn(2+) site is built by cysteine 230, cysteine 233, cysteine 249, and cysteine 252. The C4-type zinc-finger motif lies at 230-252 (CENCYELNYRSFFRSKMNICEQC).

This sequence belongs to the AccD/PCCB family. Acetyl-CoA carboxylase is a heterohexamer composed of biotin carboxyl carrier protein, biotin carboxylase and 2 subunits each of ACCase subunit alpha and ACCase plastid-coded subunit beta (accD). Zn(2+) serves as cofactor.

It localises to the plastid. Its subcellular location is the chloroplast stroma. It catalyses the reaction N(6)-carboxybiotinyl-L-lysyl-[protein] + acetyl-CoA = N(6)-biotinyl-L-lysyl-[protein] + malonyl-CoA. It functions in the pathway lipid metabolism; malonyl-CoA biosynthesis; malonyl-CoA from acetyl-CoA: step 1/1. In terms of biological role, component of the acetyl coenzyme A carboxylase (ACC) complex. Biotin carboxylase (BC) catalyzes the carboxylation of biotin on its carrier protein (BCCP) and then the CO(2) group is transferred by the transcarboxylase to acetyl-CoA to form malonyl-CoA. The chain is Acetyl-coenzyme A carboxylase carboxyl transferase subunit beta, chloroplastic from Chloranthus spicatus (Chulantree).